A 123-amino-acid polypeptide reads, in one-letter code: UPF0342 protein LAR_1202 (123 aa).

This sequence belongs to the UPF0342 family.

In Limosilactobacillus reuteri subsp. reuteri (strain JCM 1112) (Lactobacillus reuteri), this protein is UPF0342 protein LAR_1202.